Consider the following 526-residue polypeptide: Putative NipSnap protein K02D10.1 (526 aa).

This sequence belongs to the NipSnap family.

The chain is Putative NipSnap protein K02D10.1 from Caenorhabditis elegans.